A 440-amino-acid chain; its full sequence is Transposon Ty1-JR2 Gag polyprotein (440 aa).

The span at 1–16 shows a compositional bias: low complexity; that stretch reads MESQQLSQHSHISHGS. Disordered regions lie at residues 1–93, 126–173, and 352–440; these read MESQ…MMTQ, PQSQ…RPPP, and GSRN…PETY. Composition is skewed to polar residues over residues 48 to 60, 71 to 93, and 127 to 152; these read TKANSQQTTTPAS, SPQTAQSHSPQNGPYPQQCMMTQ, and QSQFPQYPSSVGTPLSTPSPESGNTF. A compositionally biased stretch (low complexity) spans 153–165; the sequence is TDSSSADSDMTST. The segment at 299–401 is RNA-binding; sequence NNGIHINNKV…NSKSKTARAH (103 aa). The segment covering 402–418 has biased composition (low complexity); that stretch reads NVSTSNNSPSTDNDSIS. Serine 416 bears the Phosphoserine mark. Over residues 419 to 428 the composition is skewed to polar residues; the sequence is KSTTEPIQLN. Residues 429–440 show a composition bias toward basic and acidic residues; that stretch reads NKHDLHLRPETY.

In terms of assembly, homotrimer.

Its subcellular location is the cytoplasm. In terms of biological role, capsid protein (CA) is the structural component of the virus-like particle (VLP), forming the shell that encapsulates the retrotransposons dimeric RNA genome. The particles are assembled from trimer-clustered units and there are holes in the capsid shells that allow for the diffusion of macromolecules. CA also has nucleocapsid-like chaperone activity, promoting primer tRNA(i)-Met annealing to the multipartite primer-binding site (PBS), dimerization of Ty1 RNA and initiation of reverse transcription. The protein is Transposon Ty1-JR2 Gag polyprotein (TY1A-JR2) of Saccharomyces cerevisiae (strain ATCC 204508 / S288c) (Baker's yeast).